Consider the following 592-residue polypeptide: Delta-like protein 3 (592 aa).

Positions 1–32 (MVSLQVSPLSQTLILAFLLPQALPAGVFELQI) are cleaved as a signal peptide. The Extracellular segment spans residues 33 to 490 (HSFGPGPGLG…LRQADPQRFL (458 aa)). The DSL domain occupies 174–213 (ARCEPPAVGAACARLCRSRSAPSRCGPGLRPCTPFPDECE). 6 consecutive EGF-like domains span residues 214–247 (APSV…PLCT), 272–308 (GPGP…LRCE), 310–349 (SGVT…SNCE), 351–387 (RVDR…PRCE), 389–425 (DLDD…RDCR), and 427–463 (RADP…VRCE). 18 disulfide bridges follow: cysteine 218/cysteine 229, cysteine 222/cysteine 235, cysteine 237/cysteine 246, cysteine 276/cysteine 287, cysteine 281/cysteine 296, cysteine 298/cysteine 307, cysteine 314/cysteine 325, cysteine 319/cysteine 337, cysteine 339/cysteine 348, cysteine 355/cysteine 366, cysteine 360/cysteine 375, cysteine 377/cysteine 386, cysteine 393/cysteine 404, cysteine 398/cysteine 413, cysteine 415/cysteine 424, cysteine 431/cysteine 442, cysteine 436/cysteine 451, and cysteine 453/cysteine 462. The helical transmembrane segment at 491 to 511 (LPPALGLLVAAGLAGAALLVI) threads the bilayer. Residues 512–592 (HVRRRGPGQD…REDWLIQVLF (81 aa)) are Cytoplasmic-facing. A disordered region spans residues 548 to 567 (QDGAGDGPSSSADWNHPEDG).

Can bind and activate Notch-1 or another Notch receptor. Post-translationally, ubiquitinated by MIB (MIB1 or MIB2), leading to its endocytosis and subsequent degradation. As to expression, predominantly expressed in the neuroectoderm and paraxial mesoderm during embryogenesis.

The protein resides in the membrane. Inhibits primary neurogenesis. May be required to divert neurons along a specific differentiation pathway. Plays a role in the formation of somite boundaries during segmentation of the paraxial mesoderm. The protein is Delta-like protein 3 (Dll3) of Mus musculus (Mouse).